A 348-amino-acid polypeptide reads, in one-letter code: Ion-translocating oxidoreductase complex subunit D (348 aa).

Over 1–22 (MAFFIASSPHLRSKRSTADVMR) the chain is Cytoplasmic. The next 2 helical transmembrane spans lie at 23-43 (WVLVCALPGLIAQTYFFGYGT) and 44-64 (LIQLLLAISVAVALEAGIMLL). The Cytoplasmic portion of the chain corresponds to 65-71 (RKRSPIS). The chain crosses the membrane as a helical span at residues 72-91 (ALRDYSAVVTAWLLAVAIPP). Topologically, residues 92–94 (LSP) are periplasmic. Residues 95 to 117 (WWVVVIGLIFAIVIAKHLYGGLG) traverse the membrane as a helical segment. Topologically, residues 118 to 125 (QNPFNPAM) are cytoplasmic. A helical membrane pass occupies residues 126-146 (IAYVVLLISFPVQMTSWMAPI). Residues 147–213 (KLTAEPSSLV…ETLTQPQFSG (67 aa)) lie on the Periplasmic side of the membrane. Thr187 carries the post-translational modification FMN phosphoryl threonine. The helical transmembrane segment at 214–234 (FAGIGWEWVNIAYLLGGLILL) threads the bilayer. At 235–242 (KLRIIRWH) the chain is on the cytoplasmic side. The chain crosses the membrane as a helical span at residues 243–263 (IPVAMLAGLVFTALLAQLFAP). Over 264 to 265 (GT) the chain is Periplasmic. The helical transmembrane segment at 266 to 286 (TASPMIHLLSGATMLGAFFIA) threads the bilayer. At 287-299 (TDPVSASTTDKGR) the chain is on the cytoplasmic side. The next 2 helical transmembrane spans lie at 300 to 320 (LIYGFFIGAMVFLIRSWGGFP) and 321 to 341 (DGVAFAVLLANMCVPLIDYYT). At 342-348 (KPRTYGH) the chain is on the cytoplasmic side.

The protein belongs to the NqrB/RnfD family. As to quaternary structure, the complex is composed of six subunits: RnfA, RnfB, RnfC, RnfD, RnfE and RnfG. FMN is required as a cofactor.

The protein resides in the cell inner membrane. Functionally, part of a membrane-bound complex that couples electron transfer with translocation of ions across the membrane. The chain is Ion-translocating oxidoreductase complex subunit D from Vibrio cholerae serotype O1 (strain ATCC 39541 / Classical Ogawa 395 / O395).